The chain runs to 189 residues: Ion-translocating oxidoreductase complex subunit B (189 aa).

Residues 1 to 26 (MSAIVIAIVVLTILALVFGVLLGFAA) form a hydrophobic region. The region spanning 32–90 (EGNPLTDQIEALLPQTQCGQCGYPGCRPYAEAIANGDKVNKCPPGGAATMEKLADLMGV) is the 4Fe-4S domain. [4Fe-4S] cluster contacts are provided by Cys-49, Cys-52, Cys-57, Cys-73, Cys-114, Cys-117, Cys-120, Cys-124, Cys-144, Cys-147, Cys-150, and Cys-154. 4Fe-4S ferredoxin-type domains follow at residues 105 to 134 (KVAYIREDECIGCTKCIQACPVDAILGSGK) and 135 to 164 (LMHTVITDYCTGCDLCVAPCPVDCIDMLPV).

The protein belongs to the 4Fe4S bacterial-type ferredoxin family. RnfB subfamily. In terms of assembly, the complex is composed of six subunits: RnfA, RnfB, RnfC, RnfD, RnfE and RnfG. Requires [4Fe-4S] cluster as cofactor.

The protein resides in the cell inner membrane. Part of a membrane-bound complex that couples electron transfer with translocation of ions across the membrane. This Shewanella pealeana (strain ATCC 700345 / ANG-SQ1) protein is Ion-translocating oxidoreductase complex subunit B.